Here is a 306-residue protein sequence, read N- to C-terminus: MAAPLIPVLTAPTAAGKTALALRLAREYGLEIVAADAFTVYRGLDLGTAKPTPQERASVPHHLLDVVDVTQSYDVAQYAAQAEAAIVDILARGRLPLVVGGTGFYLSALSRGLPLTPPSDPKMRAALEAELQERGLDALLAEIEQANPAEAARMERNPRRVVRALEVYRAAGRFPGEFGYSPPAFQYQVFAFSPPAAEMEQRVQERTAAMLRAGWPQEAQWLAGQVPPEQEPRPTVWQALGYAEALAVAQGRLSLAGAEQAIALATRQYGKRQLTWMRRQLGAEVQSPDAAEAHLRAFLERSGAPS.

11 to 18 (APTAAGKT) contacts ATP. 13 to 18 (TAAGKT) is a binding site for substrate.

It belongs to the IPP transferase family. As to quaternary structure, monomer. Requires Mg(2+) as cofactor.

The catalysed reaction is adenosine(37) in tRNA + dimethylallyl diphosphate = N(6)-dimethylallyladenosine(37) in tRNA + diphosphate. Its function is as follows. Catalyzes the transfer of a dimethylallyl group onto the adenine at position 37 in tRNAs that read codons beginning with uridine, leading to the formation of N6-(dimethylallyl)adenosine (i(6)A). In Deinococcus radiodurans (strain ATCC 13939 / DSM 20539 / JCM 16871 / CCUG 27074 / LMG 4051 / NBRC 15346 / NCIMB 9279 / VKM B-1422 / R1), this protein is tRNA dimethylallyltransferase.